The chain runs to 246 residues: 7-cyano-7-deazaguanine synthase (246 aa).

24-34 (FSGGLDSTTVL) provides a ligand contact to ATP. Residues Cys-209, Cys-219, Cys-222, and Cys-225 each coordinate Zn(2+).

It belongs to the QueC family. The cofactor is Zn(2+).

The catalysed reaction is 7-carboxy-7-deazaguanine + NH4(+) + ATP = 7-cyano-7-deazaguanine + ADP + phosphate + H2O + H(+). The protein operates within purine metabolism; 7-cyano-7-deazaguanine biosynthesis. In terms of biological role, catalyzes the ATP-dependent conversion of 7-carboxy-7-deazaguanine (CDG) to 7-cyano-7-deazaguanine (preQ(0)). This is 7-cyano-7-deazaguanine synthase from Polynucleobacter asymbioticus (strain DSM 18221 / CIP 109841 / QLW-P1DMWA-1) (Polynucleobacter necessarius subsp. asymbioticus).